We begin with the raw amino-acid sequence, 110 residues long: MFKGSVSLYILCFALGLRNTFLIYNVCNNIKNNCMDNTSGPIGDTIFLIYGIIIIIGPRRCFFFYLKRVVLLQGTHEWCTQGLFPWLKKLEITNVHCHLRRFIICQLHLI.

A run of 2 helical transmembrane segments spans residues 6–26 (VSLY…IYNV) and 38–58 (TSGP…IIGP).

Its subcellular location is the membrane. This is an uncharacterized protein from Saccharomyces cerevisiae (strain ATCC 204508 / S288c) (Baker's yeast).